The chain runs to 228 residues: Glycosylphosphatidylinositol-anchored high density lipoprotein-binding protein 1 (228 aa).

Positions 1-22 are cleaved as a signal peptide; it reads MKALRAVLLILLLSGQPGSGWA. Residues 21–32 are disordered; that stretch reads WAQEDGDADPEP. Residues 24 to 48 are important for LPL transport to the lumenal surface of endothelial cells; it reads EDGDADPEPENYNYDDDDDEEEEEE. Positions 24–49 are enriched in acidic residues; that stretch reads EDGDADPEPENYNYDDDDDEEEEEET. Residue tyrosine 35 is modified to Sulfotyrosine. Residues 61-148 form the UPAR/Ly6 domain; it reads LQCYFCQVLH…PWQNPQVQNP (88 aa). Cystine bridges form between cysteine 63-cysteine 88, cysteine 66-cysteine 75, cysteine 81-cysteine 109, cysteine 113-cysteine 129, and cysteine 130-cysteine 135. The N-linked (GlcNAc...) asparagine glycan is linked to asparagine 76. The tract at residues 102 to 108 is important for interaction with LPL; it reads LTTYSMW. Residues 145–200 form a disordered region; that stretch reads VQNPLGGRADSPLESGTRHPQGGKFSHPQVVKAAHPQSDGANLPKSGKANQPQGSG. A lipid anchor (GPI-anchor amidated glycine) is attached at glycine 198. Residues 199–228 constitute a propeptide, removed in mature form; sequence SGAGYPSGWTKFGNIALLLSFFTCLWASGA.

Mostly monomer, but also homodimer and homooligomer. Interacts with lipoprotein lipase (LPL). Interacts with high affinity with high-density lipoprotein (HDL). Interacts with chylomicrons. Interacts with APOA5. In terms of processing, glycosylation of Asn-76 is critical for cell surface localization. Sulfation of a Tyr in the N-terminal acidic region increases the affinity for LPL. Detected in fat tissue. Detected on the luminal surface of capillary endothelial cells in heart, skeletal muscle and brown adipose tissue (at protein level). Detected in heart and brown adipose tissue. Expressed at lower levels in lung and liver.

It localises to the apical cell membrane. Its subcellular location is the basolateral cell membrane. It is found in the cell membrane. Mediates the transport of lipoprotein lipase LPL from the basolateral to the apical surface of endothelial cells in capillaries. Anchors LPL on the surface of endothelial cells in the lumen of blood capillaries. Thereby, plays an important role in lipolytic processing of chylomicrons by LPL, triglyceride metabolism and lipid homeostasis. Binds chylomicrons and phospholipid particles that contain APOA5. Binds high-density lipoprotein (HDL) and plays a role in the uptake of lipids from HDL. The protein is Glycosylphosphatidylinositol-anchored high density lipoprotein-binding protein 1 of Mus musculus (Mouse).